Consider the following 265-residue polypeptide: Di-trans,poly-cis-undecaprenyl-diphosphate synthase (265 aa).

The RXG motif; crucial for prenyltransferase activity signature appears at 236–238 (RFG).

This sequence belongs to the UPP synthase family. The cofactor is Mg(2+).

It catalyses the reaction 8 isopentenyl diphosphate + (2E,6E)-farnesyl diphosphate = di-trans,octa-cis-undecaprenyl diphosphate + 8 diphosphate. The protein operates within protein modification; protein glycosylation. Its pathway is lipid metabolism. Functionally, cis-prenyl transferase involved in the synthesis of dolichol, a long-chain polyprenol that is utilized as a sugar carrier in protein glycosylation in the endoplasmic reticulum (ER). Catalyzes the sequential condensation of isopentenyl pyrophosphate (IPP) with farnesyl pyrophosphate (FPP) to produce a polyprenyl pyrophosphate which contains 11 (major) and 12 (minor) isoprene units. The polypeptide is Di-trans,poly-cis-undecaprenyl-diphosphate synthase (Giardia intestinalis (strain ATCC 50803 / WB clone C6) (Giardia lamblia)).